The chain runs to 274 residues: Trehalose transport system permease protein SugB (274 aa).

The next 6 membrane-spanning stretches (helical) occupy residues 8–28 (YWAV…LWIF), 70–90 (IGIG…AAYA), 102–122 (LIGA…TPLF), 137–157 (LILP…SAFF), 182–202 (VIVP…FIFA), and 239–259 (GSIA…VLIF). In terms of domain architecture, ABC transmembrane type-1 spans 66–259 (LINSIGIGLI…IPIIVFVLIF (194 aa)).

It belongs to the binding-protein-dependent transport system permease family. As to quaternary structure, the complex is composed of two ATP-binding proteins (SugC), two transmembrane proteins (Suga and SugB) and a solute-binding protein (LpqY).

It is found in the cell inner membrane. Its function is as follows. Part of the ABC transporter complex LpqY-SugA-SugB-SugC, which is highly specific for uptake of trehalose. Involved in the recycling of extracellular trehalose released from trehalose-containing molecules synthesized by M.tuberculosis. Trehalose uptake is essential for virulence. Probably responsible for the translocation of the substrate across the membrane. This is Trehalose transport system permease protein SugB (sugB) from Mycobacterium tuberculosis (strain CDC 1551 / Oshkosh).